The primary structure comprises 624 residues: Chaperone protein HtpG (624 aa).

Positions 1 to 336 (MKGQETRGFQ…SNDLPLNVSR (336 aa)) are a; substrate-binding. The interval 337–552 (EILQDSTVTR…ADEMSTQMAK (216 aa)) is b. Positions 553-624 (LFAAAGQSVP…IRRMNQLLVS (72 aa)) are c.

It belongs to the heat shock protein 90 family. In terms of assembly, homodimer.

The protein resides in the cytoplasm. Molecular chaperone. Has ATPase activity. This chain is Chaperone protein HtpG, found in Salmonella paratyphi A (strain ATCC 9150 / SARB42).